Here is a 367-residue protein sequence, read N- to C-terminus: Phosphoribosylaminoimidazole-succinocarboxamide synthase (367 aa).

The protein belongs to the SAICAR synthetase family.

It carries out the reaction 5-amino-1-(5-phospho-D-ribosyl)imidazole-4-carboxylate + L-aspartate + ATP = (2S)-2-[5-amino-1-(5-phospho-beta-D-ribosyl)imidazole-4-carboxamido]succinate + ADP + phosphate + 2 H(+). The protein operates within purine metabolism; IMP biosynthesis via de novo pathway; 5-amino-1-(5-phospho-D-ribosyl)imidazole-4-carboxamide from 5-amino-1-(5-phospho-D-ribosyl)imidazole-4-carboxylate: step 1/2. This is Phosphoribosylaminoimidazole-succinocarboxamide synthase from Shewanella pealeana (strain ATCC 700345 / ANG-SQ1).